The chain runs to 783 residues: Type 4 coupling protein DotL (783 aa).

Residues 47 to 67 (VSYYFSEAATFLLIMGGIFFL) form a helical membrane-spanning segment. The interval 100 to 500 (NIARGITFFG…ICMKLEDPTE (401 aa)) is ATPase domain. The interval 671–773 (VEGALTIFSK…SAKISAEREK (103 aa)) is interaction with IcmS/IcmW.

The T4BSS is a complex nanomachine composed of several subcomplexes. This subunit is part of the Type IV Coupling Complex (T4CC), a subcomplex composed of the DotLMNYZ core and the IcmSW-LvgA adapter subunits, linked by the C-terminal tail of DotL. Six DotLMNYZ hetero-pentameric units may assemble into a hexameric nanomachine, forming an inner membrane channel for effectors to pass through. Interacts directly with DotM. Interacts directly, via its C-terminal region, with the type IV adapter proteins IcmS and IcmW. Also interacts with DotN and LvgA via its C-terminal region.

It is found in the cell inner membrane. In terms of biological role, component of the Dot/Icm type IVB secretion system (T4BSS), which is used to inject bacterial effector proteins into eukaryotic host cells. Part of a subcomplex which recruits effector proteins and delivers them to the core transmembrane subcomplex. Plays a central role in the assembly of the subcomplex. Required for the recruitment of IcmS and IcmW to the inner membrane and for the translocation of adapter-dependent substrates. May have ATPase activity. This is Type 4 coupling protein DotL from Legionella pneumophila subsp. pneumophila (strain Philadelphia 1 / ATCC 33152 / DSM 7513).